We begin with the raw amino-acid sequence, 103 residues long: Small ribosomal subunit protein uS10 (103 aa).

The protein belongs to the universal ribosomal protein uS10 family. Part of the 30S ribosomal subunit.

Involved in the binding of tRNA to the ribosomes. The polypeptide is Small ribosomal subunit protein uS10 (Colwellia psychrerythraea (strain 34H / ATCC BAA-681) (Vibrio psychroerythus)).